A 558-amino-acid polypeptide reads, in one-letter code: MLYNKYVKYPKVKLDNREWPDKQIEKAPIWCSVDLRDGNQALPKPMNVDEKIKMFKMLVDIGFKEIEIGFPSASETEYEFTRKLIEDKLIPEDVTIQVLTQAREHLVKKTFEALKGVKTAIVHVYNSTSELQRRVVFKKDKDEVKSLAIKGAQMVKKYSEYTEYSESKFVFEYSPESFTGTELDYALEVCEAVLNVWKPSKENKAIINLPSTVEMATPNIYADQIEWFCKKLLNRESVILSLHTHNDRGTCTASSELGILAGADRVEGTLFGNGERTGNLDIMNMALNMYSQGVDPELEFSNLNDIVEAYEECTKMVVHERHPYAGKLVFTAFSGSHQDAIRKGLKSLKEGKNKHWEVPYLAVDPHDLGREYEEIIRINSQSGKGGTAYIMESDFGFILPKAMHPEFGKVIKKKSDELDCELSPEQIFKFFKEEYLENRSPYYLKNYKIHSIQNIEEEKNTVDIEAVISVNGKDTSIEGVGNGPVDAFFNAMNNKKYNGCKFISYDEHALNIGSHSKAVAYVQIESQDKKYFGVGISDNIDTASINAIVSALNRSKLK.

Residues 28-304 (PIWCSVDLRD…DPELEFSNLN (277 aa)) enclose the Pyruvate carboxyltransferase domain. Mg(2+)-binding residues include aspartate 37, histidine 243, histidine 245, and asparagine 279. Residues 438–558 (NRSPYYLKNY…VSALNRSKLK (121 aa)) are regulatory domain.

This sequence belongs to the alpha-IPM synthase/homocitrate synthase family. LeuA type 2 subfamily. Homodimer. It depends on Mg(2+) as a cofactor.

It localises to the cytoplasm. It carries out the reaction 3-methyl-2-oxobutanoate + acetyl-CoA + H2O = (2S)-2-isopropylmalate + CoA + H(+). It functions in the pathway amino-acid biosynthesis; L-leucine biosynthesis; L-leucine from 3-methyl-2-oxobutanoate: step 1/4. In terms of biological role, catalyzes the condensation of the acetyl group of acetyl-CoA with 3-methyl-2-oxobutanoate (2-ketoisovalerate) to form 3-carboxy-3-hydroxy-4-methylpentanoate (2-isopropylmalate). The polypeptide is 2-isopropylmalate synthase (Clostridium acetobutylicum (strain ATCC 824 / DSM 792 / JCM 1419 / IAM 19013 / LMG 5710 / NBRC 13948 / NRRL B-527 / VKM B-1787 / 2291 / W)).